Reading from the N-terminus, the 662-residue chain is 72 kDa type IV collagenase (662 aa).

A signal peptide spans 1–29; that stretch reads MEARVAWGALAGPLRVLCVLCCLLGRAIA. Positions 30-109 are cleaved as a propeptide — activation peptide; the sequence is APSPIIKFPG…PRCGNPDVAN (80 aa). Residues 100-107 carry the Cysteine switch motif; it reads PRCGNPDV. Cysteine 102 is a binding site for Zn(2+). Residues 110–221 are collagenase-like 1; that stretch reads YNFFPRKPKW…LWTLGEGQVV (112 aa). 2 residues coordinate Ca(2+): aspartate 134 and aspartate 168. Zn(2+)-binding residues include histidine 178 and aspartate 180. 2 residues coordinate Ca(2+): aspartate 185 and glycine 186. Histidine 193 contacts Zn(2+). Positions 200, 202, and 204 each coordinate Ca(2+). Histidine 206 contributes to the Zn(2+) binding site. Ca(2+) is bound by residues aspartate 208, aspartate 209, and glutamate 211. The tract at residues 222-396 is collagen-binding; that stretch reads RVKYGNADGE…WGFCPDQGYS (175 aa). 3 Fibronectin type-II domains span residues 228 to 276, 286 to 334, and 344 to 392; these read ADGE…FCPH, ADGQ…FCPE, and SEGA…FCPD. Disulfide bonds link cysteine 233-cysteine 259, cysteine 247-cysteine 274, cysteine 291-cysteine 317, cysteine 305-cysteine 332, cysteine 349-cysteine 375, and cysteine 363-cysteine 390. Residues 397-467 are collagenase-like 2; that stretch reads LFLVAAHEFG…GPTPTLGPVT (71 aa). Residue histidine 403 participates in Zn(2+) binding. Residue glutamate 404 is part of the active site. The Zn(2+) site is built by histidine 407 and histidine 413. The interval 414–662 is required for inhibitor TIMP2 binding; the sequence is SQDPGALMAP…GSIKSDWLGC (249 aa). Residues 446 to 465 are disordered; that stretch reads GPSPDADTDTGTGPTPTLGP. Cysteine 471 and cysteine 662 are joined by a disulfide. 4 Hemopexin repeats span residues 474–518, 519–565, 567–615, and 616–662; these read DIVF…WPEL, PEKI…GLPP, VQQV…WNAI, and PDNL…WLGC. Residues aspartate 478, aspartate 523, and aspartate 571 each coordinate Ca(2+). Asparagine 575 carries N-linked (GlcNAc...) asparagine glycosylation. Ca(2+) is bound at residue aspartate 620. N-linked (GlcNAc...) asparagine glycosylation occurs at asparagine 644.

It belongs to the peptidase M10A family. As to quaternary structure, interacts (via the C-terminal hemopexin-like domains-containing region) with the integrin alpha-V/beta-3; the interaction promotes vascular invasion in angiogenic vessels and melamoma cells. Interacts (via the C-terminal PEX domain) with TIMP2 (via the C-terminal); the interaction inhibits the degradation activity. Interacts with GSK3B. Ca(2+) serves as cofactor. Requires Zn(2+) as cofactor. Post-translationally, phosphorylation on multiple sites modulates enzymatic activity. Phosphorylated by PKC in vitro. In terms of processing, the propeptide is processed by MMP14 (MT-MMP1) and MMP16 (MT-MMP3). Autocatalytic cleavage in the C-terminal produces the anti-angiogenic peptide, PEX. This processing appears to be facilitated by binding integrinv/beta3.

Its subcellular location is the secreted. The protein localises to the extracellular space. It is found in the extracellular matrix. The protein resides in the membrane. It localises to the nucleus. Its subcellular location is the cytoplasm. The protein localises to the mitochondrion. The catalysed reaction is Cleavage of gelatin type I and collagen types IV, V, VII, X. Cleaves the collagen-like sequence Pro-Gln-Gly-|-Ile-Ala-Gly-Gln.. In terms of biological role, ubiquitinous metalloproteinase that is involved in diverse functions such as remodeling of the vasculature, angiogenesis, tissue repair, tumor invasion, inflammation, and atherosclerotic plaque rupture. As well as degrading extracellular matrix proteins, can also act on several nonmatrix proteins such as big endothelial 1 and beta-type CGRP promoting vasoconstriction. Also cleaves KISS at a Gly-|-Leu bond. Appears to have a role in myocardial cell death pathways. Contributes to myocardial oxidative stress by regulating the activity of GSK3beta. Cleaves GSK3beta in vitro. Involved in the formation of the fibrovascular tissues. Its function is as follows. PEX, the C-terminal non-catalytic fragment of MMP2, possesses anti-angiogenic and anti-tumor properties and inhibits cell migration and cell adhesion to FGF2 and vitronectin. Ligand for integrin alpha-v/beta-3 on the surface of blood vessels. Mediates the proteolysis of CHUK/IKKA and initiates a primary innate immune response by inducing mitochondrial-nuclear stress signaling with activation of the pro-inflammatory NF-kappaB, NFAT and IRF transcriptional pathways. The chain is 72 kDa type IV collagenase (Mmp2) from Mus musculus (Mouse).